Here is a 230-residue protein sequence, read N- to C-terminus: Transmembrane ascorbate ferrireductase 2 (230 aa).

2 consecutive transmembrane segments (helical) span residues 5–25 (VLGG…IAAL) and 50–70 (VHPV…MLAY). The Cytochrome b561 domain occupies 14–218 (VVRVLGFIIA…LGGFVILGVV (205 aa)). His51 provides a ligand contact to heme b. 2 residues coordinate L-ascorbate: Lys77 and Lys81. Residues 82–102 (LVHLTLQLTAFILSLIGVWAA) traverse the membrane as a helical segment. His84 contacts heme b. Monodehydro-L-ascorbate radical-binding residues include Phe105, His106, and Tyr115. Heme b is bound at residue His118. The helical transmembrane segment at 120-140 (WLGLACLFLFAFQWAAGFVTY) threads the bilayer. Tyr140, Arg150, and Ala151 together coordinate L-ascorbate. A heme b-binding site is contributed by His157. The helical transmembrane segment at 157–177 (HVFLGISIYALALVTATTGIL) threads the bilayer. Residues Phe182 and Asn186 each contribute to the monodehydro-L-ascorbate radical site. The helical transmembrane segment at 198–218 (LVNTMGVLILILGGFVILGVV) threads the bilayer.

Homodimer. Heme b is required as a cofactor. Expressed in roots, seedlings, leaves and flowers. Expressed in the L1 layer of the shoot apex, in the epidermis of leaf primordia and young leaves and in vascular bundles. In the differentiation zone of the root, detected in the pericycle and in the epidermis, but not in the cortex. Strongly expressed in the cortical region of the root tip, in the meristematic tissue and in the epidermal cell layer of lateral roots, but not in the root caps. Highly expressed in unfertilized ovules. In mature embryos, expressed in the epidermis, cotyledon tips and root tips.

Its subcellular location is the membrane. The catalysed reaction is Fe(3+)(out) + L-ascorbate(in) = monodehydro-L-ascorbate radical(in) + Fe(2+)(out) + H(+). In terms of biological role, two-heme-containing cytochrome. Catalyzes ascorbate-dependent transmembrane ferric-chelate reduction. The polypeptide is Transmembrane ascorbate ferrireductase 2 (CYB561B) (Arabidopsis thaliana (Mouse-ear cress)).